A 147-amino-acid polypeptide reads, in one-letter code: Protein MC014 (147 aa).

It is found in the host nucleus. The sequence is that of Protein MC014 (MC014) from Homo sapiens (Human).